The chain runs to 279 residues: 3-methyl-2-oxobutanoate hydroxymethyltransferase (279 aa).

Residues Asp43 and Asp82 each coordinate Mg(2+). 3-methyl-2-oxobutanoate is bound by residues 43–44, Asp82, and Lys112; that span reads DS. Glu114 is a binding site for Mg(2+). Residue Glu181 is the Proton acceptor of the active site.

This sequence belongs to the PanB family. Homodecamer; pentamer of dimers. Mg(2+) serves as cofactor.

The protein resides in the cytoplasm. The catalysed reaction is 3-methyl-2-oxobutanoate + (6R)-5,10-methylene-5,6,7,8-tetrahydrofolate + H2O = 2-dehydropantoate + (6S)-5,6,7,8-tetrahydrofolate. Its pathway is cofactor biosynthesis; (R)-pantothenate biosynthesis; (R)-pantoate from 3-methyl-2-oxobutanoate: step 1/2. Functionally, catalyzes the reversible reaction in which hydroxymethyl group from 5,10-methylenetetrahydrofolate is transferred onto alpha-ketoisovalerate to form ketopantoate. The sequence is that of 3-methyl-2-oxobutanoate hydroxymethyltransferase from Bacillus anthracis (strain A0248).